Consider the following 450-residue polypeptide: Glutamate--tRNA ligase 2 (450 aa).

The 'HIGH' region motif lies at 10 to 20 (PSPTGFLHIGG). Positions 232–236 (KLSKR) match the 'KMSKS' region motif. Lys235 serves as a coordination point for ATP.

The protein belongs to the class-I aminoacyl-tRNA synthetase family. Glutamate--tRNA ligase type 1 subfamily. As to quaternary structure, monomer.

The protein resides in the cytoplasm. It carries out the reaction tRNA(Glu) + L-glutamate + ATP = L-glutamyl-tRNA(Glu) + AMP + diphosphate. Catalyzes the attachment of glutamate to tRNA(Glu) in a two-step reaction: glutamate is first activated by ATP to form Glu-AMP and then transferred to the acceptor end of tRNA(Glu). The protein is Glutamate--tRNA ligase 2 of Wolbachia pipientis subsp. Culex pipiens (strain wPip).